Consider the following 277-residue polypeptide: Diaminopimelate epimerase (277 aa).

Substrate contacts are provided by Asn-15 and Asn-74. Cys-83 serves as the catalytic Proton donor. Substrate is bound by residues 84–85 (GN), Asn-159, Asn-194, and 212–213 (ER). Cys-221 acts as the Proton acceptor in catalysis. 222–223 (GT) serves as a coordination point for substrate.

Belongs to the diaminopimelate epimerase family. As to quaternary structure, homodimer.

The protein localises to the cytoplasm. The catalysed reaction is (2S,6S)-2,6-diaminopimelate = meso-2,6-diaminopimelate. Its pathway is amino-acid biosynthesis; L-lysine biosynthesis via DAP pathway; DL-2,6-diaminopimelate from LL-2,6-diaminopimelate: step 1/1. Catalyzes the stereoinversion of LL-2,6-diaminopimelate (L,L-DAP) to meso-diaminopimelate (meso-DAP), a precursor of L-lysine and an essential component of the bacterial peptidoglycan. Involved in the succinylase branch of the diaminopimelate biosynthesis. This chain is Diaminopimelate epimerase, found in Corynebacterium glutamicum (strain ATCC 13032 / DSM 20300 / JCM 1318 / BCRC 11384 / CCUG 27702 / LMG 3730 / NBRC 12168 / NCIMB 10025 / NRRL B-2784 / 534).